The primary structure comprises 406 residues: Vacuole membrane protein 1 (406 aa).

Residue alanine 2 is modified to N-acetylalanine. Topologically, residues 2–43 are cytoplasmic; it reads AENGQNCDQRRVAMNKEQYNGNFTDPSSVNEKKRRDREERQN. A helical membrane pass occupies residues 44–63; it reads IVLWRQPLITLQYFSLETLV. Residues 64-77 lie on the Extracellular side of the membrane; that stretch reads ILKEWTSKLWHRQS. A helical membrane pass occupies residues 78–98; sequence IVVSFLLLLAVLTATYYVEGA. At 99–109 the chain is on the cytoplasmic side; the sequence is HQQYVQRIEKQ. The helical transmembrane segment at 110-130 threads the bilayer; that stretch reads FLLYAYWIGLGILSSVGLGTG. The Extracellular portion of the chain corresponds to 131–250; that stretch reads LHTFLLYLGP…ASRAKLAVQN (120 aa). Residues 173–316 are VTT domain; that stretch reads GTEGTISLWS…FVIVAFSKHI (144 aa). A helical transmembrane segment spans residues 251–271; it reads LVQKVGFFGILACASIPNPLF. Topologically, residues 272-273 are cytoplasmic; it reads DL. Residues 274–294 traverse the membrane as a helical segment; the sequence is AGITCGHFLVPFWTFFGATLI. The Extracellular portion of the chain corresponds to 295–306; sequence GKAIIKMHIQKL. Residues 307–327 form a helical membrane-spanning segment; it reads FVIVAFSKHIVEQMVAFIGAV. The Cytoplasmic segment spans residues 328-363; it reads PGIGPSLQKPFQEYLEAQRQKLHHRSEMGTPQGENW. Residues 364-384 form a helical membrane-spanning segment; it reads LSWMFEKLVVVMVCYFILSII. Residues 385–406 lie on the Extracellular side of the membrane; it reads NSMAQSYAKRIQQRLDPKEKTK.

The protein belongs to the VMP1 family. Interacts with BECN1. Interacts with TJP1. Interacts with TP53INP2. Interacts with TMEM41B. Interacts with ATP2A2, PLN and SLN; competes with PLN and SLN to prevent them from forming an inhibitory complex with ATP2A2. Interacts with ATG2A.

Its subcellular location is the endoplasmic reticulum-Golgi intermediate compartment membrane. The protein localises to the cell membrane. It is found in the vacuole membrane. The protein resides in the endoplasmic reticulum membrane. The catalysed reaction is a 1,2-diacyl-sn-glycero-3-phospho-L-serine(in) = a 1,2-diacyl-sn-glycero-3-phospho-L-serine(out). It carries out the reaction cholesterol(in) = cholesterol(out). The enzyme catalyses a 1,2-diacyl-sn-glycero-3-phosphocholine(in) = a 1,2-diacyl-sn-glycero-3-phosphocholine(out). It catalyses the reaction a 1,2-diacyl-sn-glycero-3-phosphoethanolamine(in) = a 1,2-diacyl-sn-glycero-3-phosphoethanolamine(out). Its function is as follows. Phospholipid scramblase involved in lipid homeostasis and membrane dynamics processes. Has phospholipid scramblase activity toward cholesterol and phosphatidylserine, as well as phosphatidylethanolamine and phosphatidylcholine. Required for autophagosome formation: participates in early stages of autophagosome biogenesis at the endoplasmic reticulum (ER) membrane by reequilibrating the leaflets of the ER as lipids are extracted by ATG2 (ATG2A or ATG2B) to mediate autophagosome assembly. Regulates ATP2A2 activity to control ER-isolation membrane contacts for autophagosome formation. In addition to autophagy, involved in other processes in which phospholipid scramblase activity is required. Modulates ER contacts with lipid droplets, mitochondria and endosomes. Plays an essential role in formation of cell junctions. Upon stress such as bacterial and viral infection, promotes formation of cytoplasmic vacuoles followed by cell death. Involved in the cytoplasmic vacuolization of acinar cells during the early stage of acute pancreatitis. The sequence is that of Vacuole membrane protein 1 from Bos taurus (Bovine).